The chain runs to 287 residues: Light-independent protochlorophyllide reductase iron-sulfur ATP-binding protein (287 aa).

ATP contacts are provided by residues glycine 10–threonine 15 and lysine 39. Serine 14 contributes to the Mg(2+) binding site. [4Fe-4S] cluster-binding residues include cysteine 95 and cysteine 129. Asparagine 180–arginine 181 is an ATP binding site.

The protein belongs to the NifH/BchL/ChlL family. As to quaternary structure, homodimer. Protochlorophyllide reductase is composed of three subunits; ChlL, ChlN and ChlB. Requires [4Fe-4S] cluster as cofactor.

It localises to the plastid. The protein resides in the chloroplast. The enzyme catalyses chlorophyllide a + oxidized 2[4Fe-4S]-[ferredoxin] + 2 ADP + 2 phosphate = protochlorophyllide a + reduced 2[4Fe-4S]-[ferredoxin] + 2 ATP + 2 H2O. It participates in porphyrin-containing compound metabolism; chlorophyll biosynthesis (light-independent). Its function is as follows. Component of the dark-operative protochlorophyllide reductase (DPOR) that uses Mg-ATP and reduced ferredoxin to reduce ring D of protochlorophyllide (Pchlide) to form chlorophyllide a (Chlide). This reaction is light-independent. The L component serves as a unique electron donor to the NB-component of the complex, and binds Mg-ATP. This Nephroselmis olivacea (Green alga) protein is Light-independent protochlorophyllide reductase iron-sulfur ATP-binding protein.